A 160-amino-acid chain; its full sequence is uncharacterized protein (160 aa).

This is an uncharacterized protein from Gracula (BFDV).